A 458-amino-acid polypeptide reads, in one-letter code: Exodeoxyribonuclease 7 large subunit (458 aa).

It belongs to the XseA family. In terms of assembly, heterooligomer composed of large and small subunits.

It localises to the cytoplasm. It catalyses the reaction Exonucleolytic cleavage in either 5'- to 3'- or 3'- to 5'-direction to yield nucleoside 5'-phosphates.. Bidirectionally degrades single-stranded DNA into large acid-insoluble oligonucleotides, which are then degraded further into small acid-soluble oligonucleotides. This is Exodeoxyribonuclease 7 large subunit from Serratia proteamaculans (strain 568).